The sequence spans 64 residues: uncharacterized protein (64 aa).

This is an uncharacterized protein from Methanothermobacter thermautotrophicus (strain ATCC 29096 / DSM 1053 / JCM 10044 / NBRC 100330 / Delta H) (Methanobacterium thermoautotrophicum).